The sequence spans 254 residues: Probable 2,4-dienoyl-CoA reductase [(2E)-enoyl-CoA-producing] (254 aa).

6–38 is a binding site for NADP(+); that stretch reads VIITGGSSGMGKAMAKKQAELGWHVMVTGRNHE. T100 lines the substrate pocket. The active-site Proton acceptor is the Y142. Position 157 (K157) interacts with NAD(+).

The protein belongs to the short-chain dehydrogenases/reductases (SDR) family. 2,4-dienoyl-CoA reductase subfamily.

It catalyses the reaction a 4,5-saturated-(2E)-enoyl-CoA + NADP(+) = a (2E,4E)-dienoyl-CoA + NADPH + H(+). The catalysed reaction is a (2E,4Z)-dienoyl-CoA + NADPH + H(+) = a 4,5-saturated-(2E)-enoyl-CoA + NADP(+). It functions in the pathway lipid metabolism; fatty acid beta-oxidation. Its function is as follows. Auxiliary enzyme of beta-oxidation. It participates in the metabolism of unsaturated fatty enoyl-CoA esters having double bonds in both even- and odd-numbered positions. Catalyzes the NADP-dependent reduction of 2,4-dienoyl-CoA to yield trans-3-enoyl-CoA. This is Probable 2,4-dienoyl-CoA reductase [(2E)-enoyl-CoA-producing] (fadH) from Bacillus subtilis (strain 168).